A 575-amino-acid chain; its full sequence is Protein AUXIN SIGNALING F-BOX 2 (575 aa).

The region spanning 1–47 is the F-box domain; sequence MNYFPDEVIEHVFDFVTSHKDRNAISLVCKSWYKIERYSRQKVFIGN. Lys69 provides a ligand contact to 1D-myo-inositol hexakisphosphate. The tract at residues 76–77 is interaction with auxin-responsive proteins; the sequence is DF. Residues 108–109 and Arg340 contribute to the 1D-myo-inositol hexakisphosphate site; that span reads KR. The interval 343 to 348 is interaction with auxin-responsive proteins; the sequence is PSDLLG. 1D-myo-inositol hexakisphosphate is bound at residue 396–398; that stretch reads RFR. The interaction with auxin-responsive proteins stretch occupies residues 400–404; it reads CILEP. Arg431 provides a ligand contact to 1D-myo-inositol hexakisphosphate. An interaction with auxin-responsive proteins region spans residues 459–460; it reads AF. Residues 479–480 and Arg504 contribute to the 1D-myo-inositol hexakisphosphate site; that span reads KK.

In terms of assembly, part of a SCF (SKP1-cullin-F-box) protein ligase complex. Interacts with Aux/IAA proteins (IAA7) in an auxin-dependent manner. As to expression, ubiquitous, with higher levels in seedlings.

It is found in the nucleus. It functions in the pathway protein modification; protein ubiquitination. Functionally, component of SCF(ASK-cullin-F-box) E3 ubiquitin ligase complexes, which may mediate the ubiquitination and subsequent proteasomal degradation of target proteins. Confers sensitivity to the virulent bacterial pathogen P.syringae. Auxin receptor that mediates Aux/IAA proteins proteasomal degradation and auxin-regulated transcription. Involved in embryogenesis regulation by auxin. This is Protein AUXIN SIGNALING F-BOX 2 (AFB2) from Arabidopsis thaliana (Mouse-ear cress).